The primary structure comprises 555 residues: E3 ubiquitin-protein ligase ARIH1 (555 aa).

Residues 1–47 are compositionally biased toward acidic residues; the sequence is MDSDEGYNYEFDEDEECSEEDSGAEEEEDDDEDEPDDDNLDLGEVEL. Positions 1–93 are disordered; the sequence is MDSDEGYNYE…GGGGGPGHEQ (93 aa). The segment covering 65 to 90 has biased composition (gly residues); that stretch reads ETGGGGGSALGPGGGGGGGGGGGGPG. Residues 103-151 form a UBA-like region; that stretch reads TAEQILQHMVECIREVNEVIQNPATITRILLSHFNWDKEKLMERYFDGN. An N6-acetyllysine modification is found at Lys140. The tract at residues 180–391 is TRIAD supradomain; it reads QDMPCQICYL…SAWYNCNRYN (212 aa). Residues Cys184, Cys187, Cys201, His203, Cys206, Cys209, Cys229, Cys234, Cys274, Cys279, Cys295, Cys297, Cys302, Cys305, His310, Cys315, Cys342, and Cys345 each coordinate Zn(2+). Residues 184 to 234 form an RING-type 1 zinc finger; the sequence is CQICYLNYPNSYFTGLECGHKFCMQCWSEYLTTKIMEEGMGQTISCPAHGC. The IBR-type zinc-finger motif lies at 254–315; that stretch reads LKYQHLITNS…GENWHDPVKC (62 aa). Residues 342–373 form an RING-type 2; atypical zinc finger; the sequence is CPKCHVTIEKDGGCNHMVCRNQNCKAEFCWVC. The active site involves Cys355. Zn(2+) contacts are provided by Cys360, Cys365, Cys370, Cys373, His380, and Cys387. Residues 406-555 are ariadne domain; it reads RAALQRYLFY…EKDLWEYIED (150 aa).

This sequence belongs to the RBR family. Ariadne subfamily. As to quaternary structure, interacts (via the first RING-type zinc finger) with UBE2L3. Associates with cullin-RING ubiquitin ligase (CRL) complexes containing CUL1, CUL2 and CUL3. Interacts with neddylated CUL1. Interacts with neddylated CUL2. Interacts with neddylated CUL3. Interacts with neddylated CUL4A. As to expression, widely expressed.

It is found in the cytoplasm. Its subcellular location is the nucleus. The protein resides in the cajal body. It carries out the reaction [E2 ubiquitin-conjugating enzyme]-S-ubiquitinyl-L-cysteine + [acceptor protein]-L-lysine = [E2 ubiquitin-conjugating enzyme]-L-cysteine + [acceptor protein]-N(6)-ubiquitinyl-L-lysine.. The protein operates within protein modification; protein ubiquitination. Its activity is regulated as follows. Autoinhibited by the ariadne domain, which masks the second RING-type zinc finger that contains the active site and inhibits the E3 activity. Inhibition is relieved upon binding to neddylated cullin-RING ubiquitin ligase complexes, which activate the E3 ligase activity of ARIH1. Its function is as follows. E3 ubiquitin-protein ligase, which catalyzes ubiquitination of target proteins together with ubiquitin-conjugating enzyme E2 UBE2L3. Acts as an atypical E3 ubiquitin-protein ligase by working together with cullin-RING ubiquitin ligase (CRL) complexes and initiating ubiquitination of CRL substrates: associates with CRL complexes and specifically mediates addition of the first ubiquitin on CRLs targets. The initial ubiquitin is then elongated by CDC34/UBE2R1 and UBE2R2. E3 ubiquitin-protein ligase activity is activated upon binding to neddylated cullin-RING ubiquitin ligase complexes. Plays a role in protein translation in response to DNA damage by mediating ubiquitination of EIF4E2, the consequences of EIF4E2 ubiquitination are however unclear. According to a report, EIF4E2 ubiquitination leads to promote EIF4E2 cap-binding and protein translation arrest. According to another report EIF4E2 ubiquitination leads to its subsequent degradation. Acts as the ligase involved in ISGylation of EIF4E2. In vitro, controls the degradation of the LINC (LInker of Nucleoskeleton and Cytoskeleton) complex member SUN2 and may therefore have a role in the formation and localization of the LINC complex, and as a consequence, may act in nuclear subcellular localization and nuclear morphology. This chain is E3 ubiquitin-protein ligase ARIH1 (Arih1), found in Mus musculus (Mouse).